The primary structure comprises 430 residues: NEDD8-activating enzyme E1 catalytic subunit (430 aa).

Residue 52–76 coordinates ATP; the sequence is GLGCELLKNLALSGFRTIEVIDMDT. The Glycyl thioester intermediate role is filled by Cys211.

The protein belongs to the ubiquitin-activating E1 family. UBA3 subfamily. Heterodimer of uba-3 and ula-1. Interacts with NEDD8 and ubc-12. As to expression, expressed in intestine, vulva epithelium and head and tail neurons.

Its subcellular location is the nucleus. It localises to the cytoplasm. It carries out the reaction ATP + [NEDD8 protein] + [E1 NEDD8-activating enzyme]-L-cysteine = AMP + diphosphate + [E1 NEDD8-activating enzyme]-S-[NEDD8 protein]-yl-L-cysteine.. It participates in protein modification; protein neddylation. Catalytic subunit of the dimeric rfl-1 (uba-3)-ula-1 E1 enzyme. E1 activates NEDD8 by first adenylating its C-terminal glycine residue with ATP, thereafter linking this residue to the side chain of the catalytic cysteine, yielding a NEDD8-uba-3 thioester and free AMP. E1 finally transfers NEDD8 to the catalytic cysteine of ubc-12. Required for cytokinesis and mitotic spindle orientation during early embryogenesis. This is NEDD8-activating enzyme E1 catalytic subunit from Caenorhabditis elegans.